A 558-amino-acid polypeptide reads, in one-letter code: T-complex protein 1 subunit eta (558 aa).

The disordered stretch occupies residues 524-558; that stretch reads VRNPKSEQPKAPPGGLRRGGPQGMAGLAKNARLGK.

It belongs to the TCP-1 chaperonin family. Heterooligomeric complex of about 850 to 900 kDa that forms two stacked rings, 12 to 16 nm in diameter.

It is found in the cytoplasm. Functionally, molecular chaperone; assists the folding of proteins upon ATP hydrolysis. Known to play a role, in vitro, in the folding of actin and tubulin. In Tetrahymena pyriformis, this protein is T-complex protein 1 subunit eta.